Here is a 438-residue protein sequence, read N- to C-terminus: Coenzyme A disulfide reductase (438 aa).

8–33 is an FAD binding site; that stretch reads GAVAGGATCASQIRRLDKESEIIVFE. 5 residues coordinate substrate: T15, Q19, R22, S39, and N42. C43 functions as the Nucleophile in the catalytic mechanism. The active-site Redox-active is C43. Position 71 (K71) interacts with substrate. 151–166 provides a ligand contact to NADP(+); sequence ALVVGAGYISLEVLEN. 267–277 provides a ligand contact to FAD; sequence TNIPNIYALGD. Position 299 (H299) interacts with substrate. Y419 contributes to the FAD binding site. Substrate is bound at residue K427.

It belongs to the class-III pyridine nucleotide-disulfide oxidoreductase family. As to quaternary structure, homodimer. FAD is required as a cofactor.

It catalyses the reaction NADP(+) + 2 CoA = CoA-disulfide + NADPH + H(+). Its function is as follows. Catalyzes specifically the NADPH-dependent reduction of coenzyme A disulfide. In Staphylococcus epidermidis (strain ATCC 35984 / DSM 28319 / BCRC 17069 / CCUG 31568 / BM 3577 / RP62A), this protein is Coenzyme A disulfide reductase.